Here is a 1390-residue protein sequence, read N- to C-terminus: ABC transporter G family member 43 (1390 aa).

Residues 1-22 (MTMPQTDGVEFASRNNLENGDG) form a disordered region. The 275-residue stretch at 137-411 (SKLSRFTFSK…FEDCGFKCPQ (275 aa)) folds into the ABC transporter 1 domain. 171-178 (GPPGCGKT) is an ATP binding site. The region spanning 489–701 (DMFKACSRRE…AEIGLTSNEF (213 aa)) is the ABC transmembrane type-2 1 domain. 6 helical membrane-spanning segments follow: residues 507-527 (FVYV…MTVY), 541-561 (YLLG…LPEL), 594-614 (IPIS…VIGY), 626-646 (LILF…GAVF), 651-671 (VATT…GFIV), and 737-757 (FGAL…ALTF). The region spanning 798–1043 (FTFQDVQYFI…VIEYFMSIPG (246 aa)) is the ABC transporter 2 domain. 835–842 (GVSGAGKT) contributes to the ATP binding site. The 215-residue stretch at 1115-1329 (EQFKACLWKQ…VLNGLLTSQY (215 aa)) folds into the ABC transmembrane type-2 2 domain. Transmembrane regions (helical) follow at residues 1134-1154 (YNLT…ILFL), 1173-1193 (MFTV…FCVA), 1218-1238 (VLVE…IVYP), 1253-1273 (FYSI…LVVV), 1279-1299 (IAFT…GYVM), 1307-1327 (WWIW…LLTS), and 1362-1382 (LVAV…AFFI).

Belongs to the ABC transporter superfamily. ABCG family. PDR (TC 3.A.1.205) subfamily.

It is found in the membrane. Functionally, may be a general defense protein. The sequence is that of ABC transporter G family member 43 (ABCG43) from Arabidopsis thaliana (Mouse-ear cress).